A 186-amino-acid polypeptide reads, in one-letter code: Ribosome maturation factor RimM (186 aa).

The PRC barrel domain occupies 100 to 182 (NEGEYHVSDL…RIEINPPVGL (83 aa)).

This sequence belongs to the RimM family. In terms of assembly, binds ribosomal protein uS19.

The protein localises to the cytoplasm. Its function is as follows. An accessory protein needed during the final step in the assembly of 30S ribosomal subunit, possibly for assembly of the head region. Essential for efficient processing of 16S rRNA. May be needed both before and after RbfA during the maturation of 16S rRNA. It has affinity for free ribosomal 30S subunits but not for 70S ribosomes. The polypeptide is Ribosome maturation factor RimM (Rippkaea orientalis (strain PCC 8801 / RF-1) (Cyanothece sp. (strain PCC 8801))).